A 355-amino-acid chain; its full sequence is Protein RecA (355 aa).

Residue 72–79 coordinates ATP; sequence GPESSGKT.

It belongs to the RecA family.

The protein localises to the cytoplasm. In terms of biological role, can catalyze the hydrolysis of ATP in the presence of single-stranded DNA, the ATP-dependent uptake of single-stranded DNA by duplex DNA, and the ATP-dependent hybridization of homologous single-stranded DNAs. It interacts with LexA causing its activation and leading to its autocatalytic cleavage. The sequence is that of Protein RecA from Thermosynechococcus vestitus (strain NIES-2133 / IAM M-273 / BP-1).